Reading from the N-terminus, the 711-residue chain is Protein ACTIVITY OF BC1 COMPLEX KINASE 3, chloroplastic (711 aa).

The transit peptide at 1–42 (MSLVVGQSLGLTLVGDGLSLRNSKINVGKSKFFSVNRRRLAR) directs the protein to the chloroplast. Positions 216–546 (SVSPEPIAAA…IELLFKDGKF (331 aa)) constitute a Protein kinase domain. ATP contacts are provided by residues 222–230 (IAAASLGQV) and K245. Residue D379 is the Proton acceptor of the active site.

This sequence belongs to the protein kinase superfamily. ADCK protein kinase family. In terms of assembly, interacts with ABC1K1 in plastoglobules (PG). Interacts with PGM48.

The protein localises to the plastid. Its subcellular location is the chloroplast. It is found in the plastoglobule. The catalysed reaction is L-seryl-[protein] + ATP = O-phospho-L-seryl-[protein] + ADP + H(+). It carries out the reaction L-threonyl-[protein] + ATP = O-phospho-L-threonyl-[protein] + ADP + H(+). Kinase that can phosphorylate the tocopherol cyclase VTE1, a key enzyme of tocopherol (vitamin E) metabolism and involved in the recycling of oxidated alpha-tocopherol quinone, possibly stabilizing it at plastoglobules. Also regulates membrane prenylquinone composition. Required for photooxidative stress responses to prevent photosystem II core and chlorophyll degradations. Together with ABC1K1, contributes to plastoglobule (PG) function in prenyl-lipid metabolism, stress response, and thylakoid remodeling. Promotes photodamage of chloroplasts under continuous red light, thus working in opposition to ABC1K1. This is Protein ACTIVITY OF BC1 COMPLEX KINASE 3, chloroplastic from Arabidopsis thaliana (Mouse-ear cress).